A 242-amino-acid polypeptide reads, in one-letter code: Small ribosomal subunit protein uS2 (242 aa).

Belongs to the universal ribosomal protein uS2 family.

The polypeptide is Small ribosomal subunit protein uS2 (Shewanella putrefaciens (strain CN-32 / ATCC BAA-453)).